The primary structure comprises 420 residues: Light-independent protochlorophyllide reductase subunit N (420 aa).

[4Fe-4S] cluster contacts are provided by C21, C46, and C103.

This sequence belongs to the BchN/ChlN family. Protochlorophyllide reductase is composed of three subunits; BchL, BchN and BchB. Forms a heterotetramer of two BchB and two BchN subunits. Requires [4Fe-4S] cluster as cofactor.

The catalysed reaction is chlorophyllide a + oxidized 2[4Fe-4S]-[ferredoxin] + 2 ADP + 2 phosphate = protochlorophyllide a + reduced 2[4Fe-4S]-[ferredoxin] + 2 ATP + 2 H2O. Its pathway is porphyrin-containing compound metabolism; bacteriochlorophyll biosynthesis (light-independent). Its function is as follows. Component of the dark-operative protochlorophyllide reductase (DPOR) that uses Mg-ATP and reduced ferredoxin to reduce ring D of protochlorophyllide (Pchlide) to form chlorophyllide a (Chlide). This reaction is light-independent. The NB-protein (BchN-BchB) is the catalytic component of the complex. This Chlorobium phaeobacteroides (strain DSM 266 / SMG 266 / 2430) protein is Light-independent protochlorophyllide reductase subunit N.